The sequence spans 130 residues: Glycine cleavage system H protein (130 aa).

The 82-residue stretch at lysine 22–glutamate 103 folds into the Lipoyl-binding domain. Position 63 is an N6-lipoyllysine (lysine 63).

Belongs to the GcvH family. The glycine cleavage system is composed of four proteins: P, T, L and H. Requires (R)-lipoate as cofactor.

In terms of biological role, the glycine cleavage system catalyzes the degradation of glycine. The H protein shuttles the methylamine group of glycine from the P protein to the T protein. In Clostridium botulinum (strain Kyoto / Type A2), this protein is Glycine cleavage system H protein.